The sequence spans 556 residues: Phosphoenolpyruvate-protein phosphotransferase (556 aa).

The Tele-phosphohistidine intermediate role is filled by H186. Residues R288 and R325 each contribute to the phosphoenolpyruvate site. Mg(2+) is bound by residues E415 and D439. Phosphoenolpyruvate contacts are provided by residues 438–439 (ND) and R449. The active-site Proton donor is the C486.

This sequence belongs to the PEP-utilizing enzyme family. In terms of assembly, homodimer. Requires Mg(2+) as cofactor.

Its subcellular location is the cytoplasm. The enzyme catalyses L-histidyl-[protein] + phosphoenolpyruvate = N(pros)-phospho-L-histidyl-[protein] + pyruvate. General (non sugar-specific) component of the phosphoenolpyruvate-dependent sugar phosphotransferase system (sugar PTS). This major carbohydrate active-transport system catalyzes the phosphorylation of incoming sugar substrates concomitantly with their translocation across the cell membrane. Enzyme I transfers the phosphoryl group from phosphoenolpyruvate (PEP) to the phosphoryl carrier protein (HPr). This chain is Phosphoenolpyruvate-protein phosphotransferase (ptsI), found in Streptomyces coelicolor (strain ATCC BAA-471 / A3(2) / M145).